The following is a 251-amino-acid chain: Imidazole glycerol phosphate synthase subunit HisF (251 aa).

Residues aspartate 11 and aspartate 130 contribute to the active site.

Belongs to the HisA/HisF family. Heterodimer of HisH and HisF.

Its subcellular location is the cytoplasm. The catalysed reaction is 5-[(5-phospho-1-deoxy-D-ribulos-1-ylimino)methylamino]-1-(5-phospho-beta-D-ribosyl)imidazole-4-carboxamide + L-glutamine = D-erythro-1-(imidazol-4-yl)glycerol 3-phosphate + 5-amino-1-(5-phospho-beta-D-ribosyl)imidazole-4-carboxamide + L-glutamate + H(+). It functions in the pathway amino-acid biosynthesis; L-histidine biosynthesis; L-histidine from 5-phospho-alpha-D-ribose 1-diphosphate: step 5/9. Its function is as follows. IGPS catalyzes the conversion of PRFAR and glutamine to IGP, AICAR and glutamate. The HisF subunit catalyzes the cyclization activity that produces IGP and AICAR from PRFAR using the ammonia provided by the HisH subunit. The polypeptide is Imidazole glycerol phosphate synthase subunit HisF (Chlorobium phaeobacteroides (strain DSM 266 / SMG 266 / 2430)).